Consider the following 106-residue polypeptide: MTSRAKKRIVLPTRPEPPSIEQILQDVHGAIASDPVFICDFSDDSSLSNNATLCEKEKQYWQSCNYVDMNNKLKEALIQLKAKCDVLRSAGEKLEEDIENLREATM.

This sequence belongs to the UPF0449 family.

The sequence is that of UPF0449 protein C19orf25 homolog from Xenopus tropicalis (Western clawed frog).